Here is a 233-residue protein sequence, read N- to C-terminus: Lipoprotein-releasing system ATP-binding protein LolD (233 aa).

Positions 6 to 233 (LQCDNLCKRY…TAELSLMGAE (228 aa)) constitute an ABC transporter domain. ATP is bound at residue 42–49 (GSSGSGKS).

The protein belongs to the ABC transporter superfamily. Lipoprotein translocase (TC 3.A.1.125) family. The complex is composed of two ATP-binding proteins (LolD) and two transmembrane proteins (LolC and LolE).

The protein localises to the cell inner membrane. Its function is as follows. Part of the ABC transporter complex LolCDE involved in the translocation of mature outer membrane-directed lipoproteins, from the inner membrane to the periplasmic chaperone, LolA. Responsible for the formation of the LolA-lipoprotein complex in an ATP-dependent manner. This is Lipoprotein-releasing system ATP-binding protein LolD from Salmonella paratyphi A (strain ATCC 9150 / SARB42).